We begin with the raw amino-acid sequence, 122 residues long: Large ribosomal subunit protein uL14c (122 aa).

Belongs to the universal ribosomal protein uL14 family. As to quaternary structure, part of the 50S ribosomal subunit.

The protein resides in the plastid. The protein localises to the chloroplast. In terms of biological role, binds to 23S rRNA. The sequence is that of Large ribosomal subunit protein uL14c from Anthoceros angustus (Hornwort).